Here is a 943-residue protein sequence, read N- to C-terminus: Protein translocase subunit SecA (943 aa).

ATP contacts are provided by residues Q90, 108-112 (GEGKT), and D509. A disordered region spans residues 534–561 (KPDNEHKPPIPQQRNSKSGGGFSANVDS).

Belongs to the SecA family. Monomer and homodimer. Part of the essential Sec protein translocation apparatus which comprises SecA, SecYEG and auxiliary proteins SecDF. Other proteins may also be involved.

The protein resides in the cell inner membrane. It localises to the cellular thylakoid membrane. Its subcellular location is the cytoplasm. The enzyme catalyses ATP + H2O + cellular proteinSide 1 = ADP + phosphate + cellular proteinSide 2.. Its function is as follows. Part of the Sec protein translocase complex. Interacts with the SecYEG preprotein conducting channel. Has a central role in coupling the hydrolysis of ATP to the transfer of proteins into and across the cell membrane, serving as an ATP-driven molecular motor driving the stepwise translocation of polypeptide chains across the membrane. Functionally, probably participates in protein translocation into and across both the cytoplasmic and thylakoid membranes in cyanobacterial cells. This Prochlorococcus marinus subsp. pastoris (strain CCMP1986 / NIES-2087 / MED4) protein is Protein translocase subunit SecA.